The sequence spans 215 residues: Protein-L-isoaspartate O-methyltransferase (215 aa).

The active site involves serine 62.

This sequence belongs to the methyltransferase superfamily. L-isoaspartyl/D-aspartyl protein methyltransferase family.

Its subcellular location is the cytoplasm. It catalyses the reaction [protein]-L-isoaspartate + S-adenosyl-L-methionine = [protein]-L-isoaspartate alpha-methyl ester + S-adenosyl-L-homocysteine. Functionally, catalyzes the methyl esterification of L-isoaspartyl residues in peptides and proteins that result from spontaneous decomposition of normal L-aspartyl and L-asparaginyl residues. It plays a role in the repair and/or degradation of damaged proteins. The chain is Protein-L-isoaspartate O-methyltransferase from Ruegeria sp. (strain TM1040) (Silicibacter sp.).